The following is a 963-amino-acid chain: Importin-13 (963 aa).

HEAT repeat units follow at residues 24–54, 56–88, 95–135, 142–179, 194–231, 236–268, 276–325, 330–372, 375–438, 440–476, 487–522, 524–558, 562–600, 603–648, 676–716, 720–754, 761–803, 815–845, 860–893, and 897–931; these read ENVEKALHQLYYDPNIENKNLAQKWLMQAQV, PQAWHFSWQLLQPDKVPEIQYFGASALHIKISR, TDQY…LSMM, AVADMVRLFQAEDSPVDSQGRCLALLELLTVLPEEFQT, LAVECGAVFPLLEQLLQQPSSPSCVRQKVLKCFSSWVQ, LQDCEALIQAAFAALQDSELFDSSVEAIVNAIS, VNTL…ALLD, WQSF…DDIL, EAEK…YEML, AELLSNLYDKLGRLLTSSEEPYSWQHTEALLYGFQSI, VVPGLIGLIPRISISNVQLADTVMFTIGALSEWLAD, PVMINSVLPLVLHALGNPELSVSSVSTLKKICREC, LPPYAANIVAVSQDVLMKQIHKTSQCMWLMQALGFLLSA, VEEN…SNLF, PVVV…VKTL, FAPMVPQLCEMLGRMYSTVPQASALDLTRQLVHIF, FPPI…ALKR, VKAVFQCAVLALKFPEAPTVKASCGFFTELL, EDGRMLLIAVLEAIGGQASRSLMDCFADILFALN, and FSLLSMWIKEALQPPGFPSARLSPEQKDTFSQQIL. In terms of domain architecture, Importin N-terminal spans 45 to 111; that stretch reads AQKWLMQAQV…KAHSFTQITR (67 aa).

It belongs to the importin beta family. As to quaternary structure, interacts with UBC9, RAN, RBM8A, eIF-1A and PAX6. In terms of tissue distribution, expressed in fetal brain, heart, intestine and kidney.

The protein localises to the cytoplasm. It is found in the nucleus. In terms of biological role, functions in nuclear protein import as nuclear transport receptor. Serves as receptor for nuclear localization signals (NLS) in cargo substrates. Is thought to mediate docking of the importin/substrate complex to the nuclear pore complex (NPC) through binding to nucleoporin and the complex is subsequently translocated through the pore by an energy requiring, Ran-dependent mechanism. At the nucleoplasmic side of the NPC, Ran binds to the importin, the importin/substrate complex dissociates and importin is re-exported from the nucleus to the cytoplasm where GTP hydrolysis releases Ran. The directionality of nuclear import is thought to be conferred by an asymmetric distribution of the GTP- and GDP-bound forms of Ran between the cytoplasm and nucleus. Mediates the nuclear import of UBC9, the RBM8A/MAGOH complex, PAX6 and probably other members of the paired homeobox family. Also mediates nuclear export of eIF-1A, and the cytoplasmic release of eIF-1A is triggered by the loading of import substrates onto IPO13. The chain is Importin-13 (Ipo13) from Rattus norvegicus (Rat).